Reading from the N-terminus, the 85-residue chain is Small ribosomal subunit protein bS16 (85 aa).

It belongs to the bacterial ribosomal protein bS16 family.

In Acinetobacter baylyi (strain ATCC 33305 / BD413 / ADP1), this protein is Small ribosomal subunit protein bS16.